The primary structure comprises 1010 residues: 2-oxoglutarate dehydrogenase-like, mitochondrial (1010 aa).

A mitochondrion-targeting transit peptide spans 1–107 (MSQLRLLLFR…RASVSSCTKT (107 aa)). Positions 28-47 (GGRRRSSGPPTTIPRSRGGV) are disordered. Positions 130, 143, and 145 each coordinate Ca(2+). Residues arginine 299, aspartate 398, asparagine 431, isoleucine 433, and glutamine 663 each coordinate thiamine diphosphate. The Mg(2+) site is built by aspartate 398, asparagine 431, and isoleucine 433.

This sequence belongs to the alpha-ketoglutarate dehydrogenase family. The OGDHC complex comprises multiple copies of three catalytic enzyme components, the 2-oxoglutarate dehydrogenase (OGDH/E1), the dihydrolipoamide dehydrogenase (DLST/E2) and the dihydrolipoamide dehydrogenase (DLD/E3). OGDHL/E1-like isoenzyme may replace OGDH in the OGDHC complex in the brain. The presence of either ODGH/E1 or ODGHL/E1-like isoenzyme in the complex may depend on its tissular distribution. It depends on thiamine diphosphate as a cofactor. Requires Mg(2+) as cofactor. In terms of tissue distribution, the OGDHL-containing OGDHC complex is present in the brain, but not in the heart.

The protein localises to the mitochondrion matrix. It catalyses the reaction N(6)-[(R)-lipoyl]-L-lysyl-[protein] + 2-oxoglutarate + H(+) = N(6)-[(R)-S(8)-succinyldihydrolipoyl]-L-lysyl-[protein] + CO2. 2-oxoglutarate dehydrogenase (E1-like) component of the 2-oxoglutarate dehydrogenase multienzyme complex (OGDHC) which mediates the decarboxylation of alpha-ketoglutarate in the tricarboxylic acid cycle. The OGDHC complex catalyzes the overall conversion of 2-oxoglutarate to succinyl-CoA and CO(2) while reducing NAD(+) to NADH. The OGDHC complex is mainly active in the mitochondrion. Involved in the inhibition of cell proliferation and in apoptosis. The chain is 2-oxoglutarate dehydrogenase-like, mitochondrial from Rattus norvegicus (Rat).